We begin with the raw amino-acid sequence, 139 residues long: Large ribosomal subunit protein uL13 (139 aa).

The protein belongs to the universal ribosomal protein uL13 family. Part of the 50S ribosomal subunit.

Functionally, this protein is one of the early assembly proteins of the 50S ribosomal subunit, although it is not seen to bind rRNA by itself. It is important during the early stages of 50S assembly. This chain is Large ribosomal subunit protein uL13, found in Wolinella succinogenes (strain ATCC 29543 / DSM 1740 / CCUG 13145 / JCM 31913 / LMG 7466 / NCTC 11488 / FDC 602W) (Vibrio succinogenes).